Here is a 150-residue protein sequence, read N- to C-terminus: Large ribosomal subunit protein uL15 (150 aa).

Positions 1-51 (MKLHTLRPAKGSVKTSKRIGRGTGSGRGGTSTKGHKGAKSRSGYSSKIGFE) are disordered. The span at 21–31 (RGTGSGRGGTS) shows a compositional bias: gly residues.

The protein belongs to the universal ribosomal protein uL15 family. Part of the 50S ribosomal subunit.

Binds to the 23S rRNA. This is Large ribosomal subunit protein uL15 from Cytophaga hutchinsonii (strain ATCC 33406 / DSM 1761 / CIP 103989 / NBRC 15051 / NCIMB 9469 / D465).